Reading from the N-terminus, the 322-residue chain is Phosphatidylglycerol--prolipoprotein diacylglyceryl transferase (322 aa).

A run of 4 helical transmembrane segments spans residues 21-41 (PLPIRAYAMCIIAGIIVAIWL), 50-70 (GGNPEVVLDAAIVAVPAGIIG), 98-118 (NGGLGIWGAVILGGLAVWAYF), and 123-143 (IPLAPFADAVAPGVILAQAIG). Arg-144 serves as a coordination point for a 1,2-diacyl-sn-glycero-3-phospho-(1'-sn-glycerol). A run of 2 helical transmembrane segments spans residues 191 to 211 (VHPTFLYEMLWNLLIFGLLIW) and 254 to 274 (INTLVSAVVFILAVIVFLRLG). A disordered region spans residues 283-322 (VDPAYHAAQAERDDTETAGLDATTGTVPGDSPETTGKKRK).

It belongs to the Lgt family.

Its subcellular location is the cell membrane. The catalysed reaction is L-cysteinyl-[prolipoprotein] + a 1,2-diacyl-sn-glycero-3-phospho-(1'-sn-glycerol) = an S-1,2-diacyl-sn-glyceryl-L-cysteinyl-[prolipoprotein] + sn-glycerol 1-phosphate + H(+). Its pathway is protein modification; lipoprotein biosynthesis (diacylglyceryl transfer). In terms of biological role, catalyzes the transfer of the diacylglyceryl group from phosphatidylglycerol to the sulfhydryl group of the N-terminal cysteine of a prolipoprotein, the first step in the formation of mature lipoproteins. This chain is Phosphatidylglycerol--prolipoprotein diacylglyceryl transferase, found in Corynebacterium efficiens (strain DSM 44549 / YS-314 / AJ 12310 / JCM 11189 / NBRC 100395).